The primary structure comprises 48 residues: uncharacterized protein (48 aa).

The chain crosses the membrane as a helical span at residues 6–26; it reads IILLMIVCLVVSVLVVVWIIL.

The protein resides in the host membrane. This is an uncharacterized protein from Spiroplasma melliferum (SpV4).